A 242-amino-acid polypeptide reads, in one-letter code: Phosphoribosylaminoimidazole-succinocarboxamide synthase (242 aa).

This sequence belongs to the SAICAR synthetase family.

The enzyme catalyses 5-amino-1-(5-phospho-D-ribosyl)imidazole-4-carboxylate + L-aspartate + ATP = (2S)-2-[5-amino-1-(5-phospho-beta-D-ribosyl)imidazole-4-carboxamido]succinate + ADP + phosphate + 2 H(+). It participates in purine metabolism; IMP biosynthesis via de novo pathway; 5-amino-1-(5-phospho-D-ribosyl)imidazole-4-carboxamide from 5-amino-1-(5-phospho-D-ribosyl)imidazole-4-carboxylate: step 1/2. This chain is Phosphoribosylaminoimidazole-succinocarboxamide synthase, found in Magnetococcus marinus (strain ATCC BAA-1437 / JCM 17883 / MC-1).